Consider the following 291-residue polypeptide: Ribosomal RNA small subunit methyltransferase I (291 aa).

Belongs to the methyltransferase superfamily. RsmI family.

It is found in the cytoplasm. The enzyme catalyses cytidine(1402) in 16S rRNA + S-adenosyl-L-methionine = 2'-O-methylcytidine(1402) in 16S rRNA + S-adenosyl-L-homocysteine + H(+). Its function is as follows. Catalyzes the 2'-O-methylation of the ribose of cytidine 1402 (C1402) in 16S rRNA. The protein is Ribosomal RNA small subunit methyltransferase I of Neisseria meningitidis serogroup A / serotype 4A (strain DSM 15465 / Z2491).